A 397-amino-acid chain; its full sequence is MSVGRRRIKLLGILMMANVFIYFIMEVSKSSSQEKNGKGEVIIPKEKFWKISTPPEAYWNREQEKLNRQYNPILSMLTNQTGEAGRLSNISHLNYCEPDLRVTSVVTGFNNLPDRFKDFLLYLRCRNYSLLIDQPDKCAKKPFLLLAIKSLTPHFARRQAIRESWGQESNAGNQTVVRVFLLGQTPPEDNHPDLSDMLKFESEKHQDILMWNYRDTFFNLSLKEVLFLRWVSTSCPDTEFVFKGDDDVFVNTHHILNYLNSLSKTKAKDLFIGDVIHNAGPHRDKKLKYYIPEVVYSGLYPPYAGGGGFLYSGHLALRLYHITDQVHLYPIDDVYTGMCLQKLGLVPEKHKGFRTFDIEEKNKNNICSYVDLMLVHSRKPQEMIDIWSQLQSAHLKC.

The Cytoplasmic portion of the chain corresponds to 1–7 (MSVGRRR). Residues 8 to 28 (IKLLGILMMANVFIYFIMEVS) traverse the membrane as a helical; Signal-anchor for type II membrane protein segment. Residues 29–397 (KSSSQEKNGK…SQLQSAHLKC (369 aa)) lie on the Lumenal side of the membrane. Residues Asn79, Asn89, Asn127, Asn173, and Asn219 are each glycosylated (N-linked (GlcNAc...) asparagine).

The protein belongs to the glycosyltransferase 31 family. In terms of assembly, interacts with B3GNT8; this interaction greatly increases B3GNT2 catalytic activity, independently of B3GNT8 enzymatic activity. Mn(2+) is required as a cofactor. As to expression, ubiquitous.

It is found in the golgi apparatus membrane. The enzyme catalyses a beta-D-galactosyl-(1-&gt;4)-N-acetyl-beta-D-glucosaminyl derivative + UDP-N-acetyl-alpha-D-glucosamine = an N-acetyl-beta-D-glucosaminyl-(1-&gt;3)-beta-D-galactosyl-(1-&gt;4)-N-acetyl-beta-D-glucosaminyl derivative + UDP + H(+). The protein operates within protein modification; protein glycosylation. Functionally, beta-1,3-N-acetylglucosaminyltransferase involved in the synthesis of poly-N-acetyllactosamine. Catalyzes the initiation and elongation of poly-N-acetyllactosamine chains. Shows a marked preference for Gal(beta1-4)Glc(NAc)-based acceptors. Probably constitutes the main polylactosamine synthase. This is N-acetyllactosaminide beta-1,3-N-acetylglucosaminyltransferase 2 (B3GNT2) from Homo sapiens (Human).